A 329-amino-acid polypeptide reads, in one-letter code: Phosphate acyltransferase (329 aa).

It belongs to the PlsX family. In terms of assembly, homodimer. Probably interacts with PlsY.

The protein localises to the cytoplasm. It catalyses the reaction a fatty acyl-[ACP] + phosphate = an acyl phosphate + holo-[ACP]. It participates in lipid metabolism; phospholipid metabolism. Its function is as follows. Catalyzes the reversible formation of acyl-phosphate (acyl-PO(4)) from acyl-[acyl-carrier-protein] (acyl-ACP). This enzyme utilizes acyl-ACP as fatty acyl donor, but not acyl-CoA. The sequence is that of Phosphate acyltransferase from Sulfurovum sp. (strain NBC37-1).